Reading from the N-terminus, the 635-residue chain is Chaperone protein DnaK (635 aa).

Phosphothreonine; by autocatalysis is present on threonine 200. Residues 595–635 (KAQPLTEKVQAKSSAENTSKEKSKADDDVVDADFEEVKDDK) are disordered. Residues 612-621 (TSKEKSKADD) are compositionally biased toward basic and acidic residues. The segment covering 622-635 (DVVDADFEEVKDDK) has biased composition (acidic residues).

Belongs to the heat shock protein 70 family.

Acts as a chaperone. The chain is Chaperone protein DnaK from Ruthia magnifica subsp. Calyptogena magnifica.